The sequence spans 856 residues: Leucine--tRNA ligase (856 aa).

The 'HIGH' region signature appears at 53–63 (PYPSGNLHMGH). The 'KMSKS' region signature appears at 622–626 (KMSKS). Residue K625 coordinates ATP.

This sequence belongs to the class-I aminoacyl-tRNA synthetase family.

The protein localises to the cytoplasm. The catalysed reaction is tRNA(Leu) + L-leucine + ATP = L-leucyl-tRNA(Leu) + AMP + diphosphate. The chain is Leucine--tRNA ligase from Prochlorococcus marinus (strain MIT 9301).